We begin with the raw amino-acid sequence, 598 residues long: Terpenoid synthase 1 (598 aa).

Mg(2+)-binding residues include Asp362, Asp366, Asn494, and Asp502. Residues 362 to 366 (DDTCD) carry the DDXXD motif motif.

It belongs to the terpene synthase family. Tpsa subfamily. It depends on Mg(2+) as a cofactor. Mn(2+) is required as a cofactor. As to expression, expressed exclusively in siliques.

It is found in the cytoplasm. Its pathway is secondary metabolite biosynthesis; terpenoid biosynthesis. This chain is Terpenoid synthase 1 (TPS01), found in Arabidopsis thaliana (Mouse-ear cress).